Consider the following 65-residue polypeptide: Large ribosomal subunit protein uL29 (65 aa).

It belongs to the universal ribosomal protein uL29 family.

This is Large ribosomal subunit protein uL29 from Bacteroides thetaiotaomicron (strain ATCC 29148 / DSM 2079 / JCM 5827 / CCUG 10774 / NCTC 10582 / VPI-5482 / E50).